A 66-amino-acid polypeptide reads, in one-letter code: Large ribosomal subunit protein bL35 (66 aa).

Belongs to the bacterial ribosomal protein bL35 family.

The sequence is that of Large ribosomal subunit protein bL35 from Caulobacter sp. (strain K31).